Consider the following 239-residue polypeptide: Suppressor of organelle fusion 1 (239 aa).

The protein belongs to the WD repeat WDR91 family. As to quaternary structure, interacts with sorf-2; the interaction is direct. Interacts with bec-1.

The protein resides in the early endosome. It localises to the late endosome. It is found in the cytoplasm. Functionally, together with sorf-2 negatively regulates the levels of phosphatidylinositol 3-phosphate (PtdIns3P) to enable the conversion of early endosomes to late endosomes. Binds to sorf-2 and the sorf-1-sorf-2 complex likely acts through bec-1, a non-catalytic subunit of phosphatidylinositol 3-kinase (PI3K), to suppress PI3K activity, thereby negatively regulating endosomal PtdIns3P levels. This Caenorhabditis elegans protein is Suppressor of organelle fusion 1.